A 148-amino-acid polypeptide reads, in one-letter code: Large ribosomal subunit protein uL15 (148 aa).

The disordered stretch occupies residues 1-57 (MRLHDLYPFPEERKTRKRVGRGSGSGLGCTSGKGNKGQNARAGGGVRPGFEGGQMPL). Composition is skewed to gly residues over residues 21–35 (RGSGSGLGCTSGKGN) and 42–52 (AGGGVRPGFEG).

The protein belongs to the universal ribosomal protein uL15 family. Part of the 50S ribosomal subunit.

In terms of biological role, binds to the 23S rRNA. The protein is Large ribosomal subunit protein uL15 of Nitratidesulfovibrio vulgaris (strain ATCC 29579 / DSM 644 / CCUG 34227 / NCIMB 8303 / VKM B-1760 / Hildenborough) (Desulfovibrio vulgaris).